Consider the following 214-residue polypeptide: Adenylate kinase (214 aa).

10–15 (GAGKGT) contacts ATP. The interval 30–59 (STGDMLRAAIKAGTELGLKAKAVMDAGQLV) is NMP. Residues Thr31, Arg36, 57–59 (QLV), 85–88 (GFPR), and Gln92 contribute to the AMP site. Residues 122-159 (GRRVHSGSGRTYHVVFNPPKVEGKDDVTGEDLVIRADD) are LID. ATP is bound by residues Arg123 and 132 to 133 (TY). AMP-binding residues include Arg156 and Arg167. Gln200 contacts ATP.

This sequence belongs to the adenylate kinase family. As to quaternary structure, monomer.

It is found in the cytoplasm. The catalysed reaction is AMP + ATP = 2 ADP. It participates in purine metabolism; AMP biosynthesis via salvage pathway; AMP from ADP: step 1/1. Functionally, catalyzes the reversible transfer of the terminal phosphate group between ATP and AMP. Plays an important role in cellular energy homeostasis and in adenine nucleotide metabolism. The polypeptide is Adenylate kinase (Aeromonas hydrophila subsp. hydrophila (strain ATCC 7966 / DSM 30187 / BCRC 13018 / CCUG 14551 / JCM 1027 / KCTC 2358 / NCIMB 9240 / NCTC 8049)).